Consider the following 416-residue polypeptide: Probable protein phosphatase 2C 75 (416 aa).

2 disordered regions span residues 1–20 (MTEI…SPTK) and 32–51 (RRQA…DRTD). A PPM-type phosphatase domain is found at 108–411 (LYGIVSVMGR…DNISVVVIDL (304 aa)). 4 residues coordinate Mn(2+): aspartate 149, glycine 150, aspartate 337, and aspartate 402.

Belongs to the PP2C family. Mg(2+) serves as cofactor. It depends on Mn(2+) as a cofactor.

It catalyses the reaction O-phospho-L-seryl-[protein] + H2O = L-seryl-[protein] + phosphate. The catalysed reaction is O-phospho-L-threonyl-[protein] + H2O = L-threonyl-[protein] + phosphate. Functionally, negative regulator of abscisic acid (ABA) responses during seed germination. In Arabidopsis thaliana (Mouse-ear cress), this protein is Probable protein phosphatase 2C 75 (AHG1).